The primary structure comprises 303 residues: Tumor necrosis factor receptor type 1-associated DEATH domain protein (303 aa).

Positions 141-157 match the Nuclear export signal motif; the sequence is QKDDELAEIDERLKSIK. Residues 208 to 298 form the Death domain; it reads TSAHIQHFAK…SIALDLLSLN (91 aa). The Nuclear localization signal signature appears at 224 to 237; sequence KPVGRSLGKTCRAL.

In terms of assembly, heterodimer with tnfrsf1a.

It is found in the nucleus. The protein resides in the cytoplasm. Its subcellular location is the cytoskeleton. Functionally, adapter molecule for tnfrsf1a that specifically associates with the cytoplasmic domain of activated tnfrsf1a mediating its interaction with fadd. The polypeptide is Tumor necrosis factor receptor type 1-associated DEATH domain protein (Xenopus laevis (African clawed frog)).